The chain runs to 252 residues: Zinc import ATP-binding protein ZnuC (252 aa).

Residues 5–220 (VTLNKISVTF…PEFIAMFGQR (216 aa)) enclose the ABC transporter domain. 37-44 (GPNGAGKS) lines the ATP pocket.

This sequence belongs to the ABC transporter superfamily. Zinc importer (TC 3.A.1.15.5) family. The complex is composed of two ATP-binding proteins (ZnuC), two transmembrane proteins (ZnuB) and a solute-binding protein (ZnuA).

It localises to the cell inner membrane. It catalyses the reaction Zn(2+)(out) + ATP(in) + H2O(in) = Zn(2+)(in) + ADP(in) + phosphate(in) + H(+)(in). Functionally, part of the ABC transporter complex ZnuABC involved in zinc import. Responsible for energy coupling to the transport system. The protein is Zinc import ATP-binding protein ZnuC of Yersinia enterocolitica serotype O:8 / biotype 1B (strain NCTC 13174 / 8081).